Reading from the N-terminus, the 171-residue chain is Protein BTG1 (171 aa).

The residue at position 159 (Ser-159) is a Phosphoserine.

Belongs to the BTG family. Interacts with CNOT7 and CNOT8.

Functionally, anti-proliferative protein. In Homo sapiens (Human), this protein is Protein BTG1 (BTG1).